The following is a 240-amino-acid chain: Peptidyl-tRNA hydrolase (240 aa).

Residue Tyr14 participates in tRNA binding. The active-site Proton acceptor is the His19. TRNA contacts are provided by Tyr64, Asn66, and Asn112. The span at 190 to 204 (KADEEKPRKDSEKKP) shows a compositional bias: basic and acidic residues. The segment at 190–240 (KADEEKPRKDSEKKPAGQSHIRQARNNNQPKLPATGPMADMLKKMFGNKGE) is disordered. Polar residues predominate over residues 209–219 (HIRQARNNNQP).

This sequence belongs to the PTH family. In terms of assembly, monomer.

The protein localises to the cytoplasm. It catalyses the reaction an N-acyl-L-alpha-aminoacyl-tRNA + H2O = an N-acyl-L-amino acid + a tRNA + H(+). Its function is as follows. Hydrolyzes ribosome-free peptidyl-tRNAs (with 1 or more amino acids incorporated), which drop off the ribosome during protein synthesis, or as a result of ribosome stalling. In terms of biological role, catalyzes the release of premature peptidyl moieties from peptidyl-tRNA molecules trapped in stalled 50S ribosomal subunits, and thus maintains levels of free tRNAs and 50S ribosomes. This chain is Peptidyl-tRNA hydrolase, found in Rhizobium etli (strain ATCC 51251 / DSM 11541 / JCM 21823 / NBRC 15573 / CFN 42).